A 588-amino-acid polypeptide reads, in one-letter code: Aspartate--tRNA ligase (588 aa).

L-aspartate is bound at residue glutamate 177. The tract at residues 201–204 (QLFK) is aspartate. Arginine 223 is a binding site for L-aspartate. Residues 223-225 (RDE) and glutamine 232 contribute to the ATP site. L-aspartate is bound at residue histidine 451. Residue glutamate 485 coordinates ATP. Arginine 492 contacts L-aspartate. 537 to 540 (GLDR) is a binding site for ATP.

The protein belongs to the class-II aminoacyl-tRNA synthetase family. Type 1 subfamily. As to quaternary structure, homodimer.

Its subcellular location is the cytoplasm. It catalyses the reaction tRNA(Asp) + L-aspartate + ATP = L-aspartyl-tRNA(Asp) + AMP + diphosphate. Functionally, catalyzes the attachment of L-aspartate to tRNA(Asp) in a two-step reaction: L-aspartate is first activated by ATP to form Asp-AMP and then transferred to the acceptor end of tRNA(Asp). The chain is Aspartate--tRNA ligase from Staphylococcus aureus (strain Newman).